The sequence spans 516 residues: Putative glucosylceramidase 2 (516 aa).

Positions 1–23 (MSIAWSCFVLGLFALASLQVALA) are cleaved as a signal peptide. The Proton donor role is filled by glutamate 254. Glutamate 358 acts as the Nucleophile in catalysis.

The protein belongs to the glycosyl hydrolase 30 family.

The catalysed reaction is a beta-D-glucosylceramide + H2O = an N-acyl-sphingoid base + D-glucose. The enzyme catalyses a beta-D-glucosyl-(1&lt;-&gt;1')-N-acylsphing-4-enine + H2O = an N-acylsphing-4-enine + D-glucose. It carries out the reaction an N-acyl-1-beta-D-glucosyl-15-methylhexadecasphing-4-enine + H2O = an N-acyl-15-methylhexadecasphing-4-enine + D-glucose. It participates in lipid metabolism; sphingolipid metabolism. Functionally, glucosylceramidase that catalyzes the hydrolysis of glucosylceramides into free ceramides and glucose. C.elegans contain specific sphingoid bases, which are unique or different in structure compared to the sphingoid bases found in other animals. Two examples of these distinctive compounds are: 15-methylhexadecasphinganine and 15-methylhexadecasphing-4-enine. In Caenorhabditis elegans, this protein is Putative glucosylceramidase 2 (gba-2).